A 400-amino-acid chain; its full sequence is Phosphoglycerate kinase (400 aa).

Residues Asp-22–Asn-24, Arg-37, His-60–Arg-63, Arg-119, and Arg-159 contribute to the substrate site. ATP is bound by residues Lys-209, Gly-297, Glu-328, and Gly-354–Ser-357.

This sequence belongs to the phosphoglycerate kinase family. In terms of assembly, monomer.

It localises to the cytoplasm. It carries out the reaction (2R)-3-phosphoglycerate + ATP = (2R)-3-phospho-glyceroyl phosphate + ADP. It functions in the pathway carbohydrate degradation; glycolysis; pyruvate from D-glyceraldehyde 3-phosphate: step 2/5. This is Phosphoglycerate kinase from Saccharopolyspora erythraea (strain ATCC 11635 / DSM 40517 / JCM 4748 / NBRC 13426 / NCIMB 8594 / NRRL 2338).